The chain runs to 402 residues: Xylose/arabinose-binding protein XylF (402 aa).

A helical transmembrane segment spans residues 38 to 58; that stretch reads GIIAGVLAAFGAGFGSGYVTA.

Belongs to the bacterial solute-binding protein 2 family. The complex is composed of two ATP-binding proteins (XylG), two transmembrane proteins (XylH) and a solute-binding protein (XylF).

The protein localises to the cell membrane. In terms of biological role, part of the ABC transporter complex XylFGH involved in the uptake of xylose and arabinose. This is Xylose/arabinose-binding protein XylF from Sulfolobus acidocaldarius (strain ATCC 33909 / DSM 639 / JCM 8929 / NBRC 15157 / NCIMB 11770).